The sequence spans 73 residues: Toxin Td4 (73 aa).

Positions 1–7 are cleaved as a signal peptide; the sequence is IGMVVEC. The LCN-type CS-alpha/beta domain occupies 8-70; the sequence is KDGYLVGNDG…TWDRATNRCG (63 aa). 4 cysteine pairs are disulfide-bonded: cysteine 18-cysteine 69, cysteine 22-cysteine 44, cysteine 30-cysteine 50, and cysteine 34-cysteine 52. Residue arginine 71 is modified to Arginine amide.

Belongs to the long (4 C-C) scorpion toxin superfamily. Sodium channel inhibitor family. Beta subfamily. As to expression, expressed by the venom gland.

Its subcellular location is the secreted. In terms of biological role, beta toxins bind voltage-independently at site-4 of sodium channels (Nav) and shift the voltage of activation toward more negative potentials thereby affecting sodium channel activation and promoting spontaneous and repetitive firing. In Tityus discrepans (Venezuelan scorpion), this protein is Toxin Td4.